The sequence spans 234 residues: Leucyl/phenylalanyl-tRNA--protein transferase (234 aa).

The protein belongs to the L/F-transferase family.

It is found in the cytoplasm. It carries out the reaction N-terminal L-lysyl-[protein] + L-leucyl-tRNA(Leu) = N-terminal L-leucyl-L-lysyl-[protein] + tRNA(Leu) + H(+). The enzyme catalyses N-terminal L-arginyl-[protein] + L-leucyl-tRNA(Leu) = N-terminal L-leucyl-L-arginyl-[protein] + tRNA(Leu) + H(+). It catalyses the reaction L-phenylalanyl-tRNA(Phe) + an N-terminal L-alpha-aminoacyl-[protein] = an N-terminal L-phenylalanyl-L-alpha-aminoacyl-[protein] + tRNA(Phe). In terms of biological role, functions in the N-end rule pathway of protein degradation where it conjugates Leu, Phe and, less efficiently, Met from aminoacyl-tRNAs to the N-termini of proteins containing an N-terminal arginine or lysine. The polypeptide is Leucyl/phenylalanyl-tRNA--protein transferase (Pectobacterium carotovorum subsp. carotovorum (strain PC1)).